The chain runs to 160 residues: RNA pyrophosphohydrolase (160 aa).

The region spanning 10 to 154 (PYRPCVGVML…KRDVYVAVLD (145 aa)) is the Nudix hydrolase domain. The Nudix box signature appears at 44 to 65 (GGVEKGEDPRAAALRELWEETG).

The protein belongs to the Nudix hydrolase family. RppH subfamily. The cofactor is a divalent metal cation.

Its function is as follows. Accelerates the degradation of transcripts by removing pyrophosphate from the 5'-end of triphosphorylated RNA, leading to a more labile monophosphorylated state that can stimulate subsequent ribonuclease cleavage. This is RNA pyrophosphohydrolase from Roseobacter denitrificans (strain ATCC 33942 / OCh 114) (Erythrobacter sp. (strain OCh 114)).